The following is a 288-amino-acid chain: UTP--glucose-1-phosphate uridylyltransferase (288 aa).

The protein belongs to the UDPGP type 2 family.

It catalyses the reaction alpha-D-glucose 1-phosphate + UTP + H(+) = UDP-alpha-D-glucose + diphosphate. It functions in the pathway glycolipid metabolism; diglucosyl-diacylglycerol biosynthesis. Its function is as follows. Catalyzes the formation of UDP-glucose from glucose-1-phosphate and UTP. This is an intermediate step in the biosynthesis of diglucosyl-diacylglycerol (Glc2-DAG), i.e. the predominant glycolipid found in the S.aureus membrane, which is also used as a membrane anchor for lipoteichoic acid (LTA). In Staphylococcus aureus (strain USA300), this protein is UTP--glucose-1-phosphate uridylyltransferase (gtaB).